A 125-amino-acid polypeptide reads, in one-letter code: Small ribosomal subunit protein bS6 (125 aa).

Belongs to the bacterial ribosomal protein bS6 family.

Its function is as follows. Binds together with bS18 to 16S ribosomal RNA. The protein is Small ribosomal subunit protein bS6 of Campylobacter jejuni subsp. jejuni serotype O:23/36 (strain 81-176).